A 144-amino-acid polypeptide reads, in one-letter code: Large ribosomal subunit protein uL15 (144 aa).

The segment at 1–58 (MHLNTLSPAPGSHKARKRCGRGIGSGIGKTGGRGHKGQKSRSGGSVRPGFEGGQMPLK) is disordered. Over residues 21–31 (RGIGSGIGKTG) the composition is skewed to gly residues.

Belongs to the universal ribosomal protein uL15 family. Part of the 50S ribosomal subunit.

Binds to the 23S rRNA. The chain is Large ribosomal subunit protein uL15 from Colwellia psychrerythraea (strain 34H / ATCC BAA-681) (Vibrio psychroerythus).